Reading from the N-terminus, the 333-residue chain is Viral cathepsin (333 aa).

Positions 1 to 20 (MTKLLNFVILASVLTVTAHA) are cleaved as a signal peptide. The propeptide at 21–124 (LTYDLNNSDE…VIKDEPQALL (104 aa)) is activation peptide. 3 cysteine pairs are disulfide-bonded: cysteine 145–cysteine 186, cysteine 179–cysteine 219, and cysteine 272–cysteine 321. Residue cysteine 148 is part of the active site. Asparagine 170 carries N-linked (GlcNAc...) asparagine; by host glycosylation. Active-site residues include histidine 280 and asparagine 300.

It belongs to the peptidase C1 family. Post-translationally, synthesized as an inactive proenzyme and activated by proteolytic removal of the inhibitory propeptide.

It carries out the reaction Endopeptidase of broad specificity, hydrolyzing substrates of both cathepsin L and cathepsin B.. Functionally, cysteine protease that plays an essential role in host liquefaction to facilitate horizontal transmission of the virus. May participate in the degradation of foreign protein expressed by the baculovirus system. This is Viral cathepsin (VCATH) from Cydia pomonella granulosis virus (isolate Mexico/1963) (CpGV).